The primary structure comprises 332 residues: N-acetyl-gamma-glutamyl-phosphate reductase (332 aa).

Residue Cys144 is part of the active site.

It belongs to the NAGSA dehydrogenase family. Type 1 subfamily.

The protein resides in the cytoplasm. The enzyme catalyses N-acetyl-L-glutamate 5-semialdehyde + phosphate + NADP(+) = N-acetyl-L-glutamyl 5-phosphate + NADPH + H(+). The protein operates within amino-acid biosynthesis; L-arginine biosynthesis; N(2)-acetyl-L-ornithine from L-glutamate: step 3/4. Its function is as follows. Catalyzes the NADPH-dependent reduction of N-acetyl-5-glutamyl phosphate to yield N-acetyl-L-glutamate 5-semialdehyde. The chain is N-acetyl-gamma-glutamyl-phosphate reductase from Archaeoglobus fulgidus (strain ATCC 49558 / DSM 4304 / JCM 9628 / NBRC 100126 / VC-16).